We begin with the raw amino-acid sequence, 308 residues long: uncharacterized protein (308 aa).

Composition is skewed to polar residues over residues 138–148 and 205–229; these read WSFTKHGSNTP and STSHLNHPSTSNSPDPLYSASQPPS. 2 disordered regions span residues 138–157 and 205–235; these read WSFTKHGSNTPSDSSSPLCN and STSHLNHPSTSNSPDPLYSASQPPSIKTDAS.

It is found in the cytoplasm. This is an uncharacterized protein from Schizosaccharomyces pombe (strain 972 / ATCC 24843) (Fission yeast).